The sequence spans 507 residues: Transposase for insertion sequences IS1326/IS1353 (507 aa).

The region spanning 6–68 (ILSAIRRWHF…PFEPKLRQWL (63 aa)) is the HTH IS21-type domain. The H-T-H motif DNA-binding region spans 19 to 40 (ASIREIARRSGLSRNTVRKYLQ). The 181-residue stretch at 122–302 (GCFIPLRFAC…TVQEAFADEQ (181 aa)) folds into the Integrase catalytic domain.

It belongs to the transposase IS21/IS408/IS1162 family.

In terms of biological role, required for the transposition of the insertion element. The protein is Transposase for insertion sequences IS1326/IS1353 (istA) of Pseudomonas aeruginosa.